The sequence spans 383 residues: MKNVLPPFIEIYRALIATPSISATEESLDQSNASLITLLAGWFSDLGFNVEVQPVPGTRNKFNMLASTGHGAGGLLLTGHTDTVPFDDGRWTRDPFTLTEHDNKLYGLGTADMKGFFAFILDALRDVDVTKLKKPLYILATADEETSMAGARYFSETTALRPDCAIIGEPTSLQPIRAHKGHISNVVRVLGQSGHSSDPARGVNAIELMHDAIGHIMQLRDSLKARYHYEAFTVPYPTLNLGHIHGGDASNRICACCELHMDIRPLPGMTLNDLNGLLNDALAPVSERWPGRLTVAELHPPIPGYECPPDHQLVEVVEKLLGTKTDVVNYCTEAPFMQTLCPTLVLGPGSINQAHQPDEYLETRFIKPTRELITQVVHHFCWH.

His-80 serves as a coordination point for Zn(2+). The active site involves Asp-82. A Zn(2+)-binding site is contributed by Asp-112. The active site involves Glu-144. Positions 145, 169, and 355 each coordinate Zn(2+).

This sequence belongs to the peptidase M20A family. ArgE subfamily. In terms of assembly, homodimer. Requires Zn(2+) as cofactor. It depends on Co(2+) as a cofactor. The cofactor is glutathione.

It localises to the cytoplasm. The enzyme catalyses N(2)-acetyl-L-ornithine + H2O = L-ornithine + acetate. The protein operates within amino-acid biosynthesis; L-arginine biosynthesis; L-ornithine from N(2)-acetyl-L-ornithine (linear): step 1/1. Catalyzes the hydrolysis of the amide bond of N(2)-acetylated L-amino acids. Cleaves the acetyl group from N-acetyl-L-ornithine to form L-ornithine, an intermediate in L-arginine biosynthesis pathway, and a branchpoint in the synthesis of polyamines. The chain is Acetylornithine deacetylase from Salmonella choleraesuis (strain SC-B67).